The following is a 267-amino-acid chain: Hemin import ATP-binding protein HmuV (267 aa).

The ABC transporter domain maps to 3–243 (LEVRGIEVWR…ELVARVFGLR (241 aa)). 35 to 42 (GPNGAGKS) is an ATP binding site.

Belongs to the ABC transporter superfamily. Heme (hemin) importer (TC 3.A.1.14.5) family. In terms of assembly, the complex is composed of two ATP-binding proteins (HmuV), two transmembrane proteins (HmuU) and a solute-binding protein (HmuT).

The protein resides in the cell inner membrane. Its function is as follows. Part of the ABC transporter complex HmuTUV involved in hemin import. Responsible for energy coupling to the transport system. This chain is Hemin import ATP-binding protein HmuV, found in Myxococcus xanthus (strain DK1622).